A 506-amino-acid polypeptide reads, in one-letter code: Tetratricopeptide repeat protein 8 (506 aa).

The interval 83-112 is disordered; that stretch reads RPGTSFARPKTSAKGVNPILRPTTNAGRPL. TPR repeat units follow at residues 217–250, 251–283, 284–317, 319–351, 353–385, 388–421, 423–455, and 456–489; these read YYWK…KKLI, ETFA…FPEN, VTML…ESNN, EAIA…GVSS, ELFL…MTDD, ADVW…DPDH, ESLV…NPYM, and FEGN…FPEH.

Part of BBSome complex, that contains at least bbs-1, bbs-2, bbs-4, bbs-5, osm-12, bbs-8/ttc-8 and bbs-9. In terms of tissue distribution, expressed in head and tail neurons. Expressed in ciliated male tail-neurons. Expressed in thermosensory and CO(2) sensory AFD neurons.

It is found in the cell projection. The protein localises to the cilium. The protein resides in the cytoplasm. Its subcellular location is the cytoskeleton. It localises to the cilium basal body. It is found in the cilium axoneme. Component of the BBSome complex. The BBSome complex is thought to function as a coat complex required for sorting of specific membrane proteins to the primary cilia. The BBSome complex is required for ciliogenesis but is dispensable for centriolar satellite function. Required for proper BBSome complex assembly and its ciliary localization. Required for cilia biogenesis and both the assembly and movement of intraflagellar transport proteins along the ciliary axoneme. Plays a role in guanylyl cyclase localization in the ring-like structures at the base of the finger compartment in AFD sensory neurons. In Caenorhabditis elegans, this protein is Tetratricopeptide repeat protein 8.